The primary structure comprises 285 residues: 2-dehydro-3-deoxyphosphooctonate aldolase (285 aa).

The protein belongs to the KdsA family.

It is found in the cytoplasm. It catalyses the reaction D-arabinose 5-phosphate + phosphoenolpyruvate + H2O = 3-deoxy-alpha-D-manno-2-octulosonate-8-phosphate + phosphate. It participates in carbohydrate biosynthesis; 3-deoxy-D-manno-octulosonate biosynthesis; 3-deoxy-D-manno-octulosonate from D-ribulose 5-phosphate: step 2/3. Its pathway is bacterial outer membrane biogenesis; lipopolysaccharide biosynthesis. This is 2-dehydro-3-deoxyphosphooctonate aldolase from Acinetobacter baumannii (strain AB307-0294).